The sequence spans 580 residues: Capsid vertex component 2 (580 aa).

2 interaction with major capsid protein/MCP regions span residues 1–49 (MDPY…ETAA) and 1–50 (MDPY…TAAE). Positions 108 to 129 (AEEADAARGDEPAGGGDGGAPP) are disordered. Positions 119–128 (PAGGGDGGAP) are enriched in gly residues.

The protein belongs to the herpesviridae CVC2 protein family. Heterodimerizes with CVC1. Interacts with major capsid protein/MCP and triplex capsid protein 1/TRX1 at the pentamer vertices. Interacts with the large tegument protein/LTP. Interacts with host NUP214; this interaction might be essential to the capsid docking to the host nuclear pore. Interacts with host TMEM250.

The protein localises to the virion. It is found in the host nucleus. In terms of biological role, capsid vertex-specific component that plays a role during viral DNA encapsidation, assuring correct genome cleavage and presumably stabilizing capsids that contain full-length viral genomes. Participates in the interaction between the capsid and the tegument through interaction with the large tegument protein/LTP. May mediate the capsid docking to the nuclear pore allowing entry of the viral genome into the host nucleus through binding to host nucleoporins NUP214. In Human herpesvirus 1 (strain 17) (HHV-1), this protein is Capsid vertex component 2.